Here is a 459-residue protein sequence, read N- to C-terminus: Methionine aminopeptidase 2-1 (459 aa).

Positions 1 to 12 (MGSKSPEDHRQG) are enriched in basic and acidic residues. The segment at 1–79 (MGSKSPEDHR…RKRNKKKSKK (79 aa)) is disordered. Residues 43-54 (GQDEDGDDDDDE) are compositionally biased toward acidic residues. The span at 67–79 (KKKRKRNKKKSKK) shows a compositional bias: basic residues. Residue His-210 participates in substrate binding. Positions 231, 242, and 311 each coordinate a divalent metal cation. Residue His-319 participates in substrate binding. A divalent metal cation-binding residues include Glu-344 and Glu-440.

This sequence belongs to the peptidase M24A family. Methionine aminopeptidase eukaryotic type 2 subfamily. Co(2+) serves as cofactor. Zn(2+) is required as a cofactor. Requires Mn(2+) as cofactor. It depends on Fe(2+) as a cofactor.

The protein localises to the cytoplasm. It catalyses the reaction Release of N-terminal amino acids, preferentially methionine, from peptides and arylamides.. Its function is as follows. Cotranslationally removes the N-terminal methionine from nascent proteins. The N-terminal methionine is often cleaved when the second residue in the primary sequence is small and uncharged (Met-Ala-, Cys, Gly, Pro, Ser, Thr, or Val). This chain is Methionine aminopeptidase 2-1, found in Pyrenophora tritici-repentis (strain Pt-1C-BFP) (Wheat tan spot fungus).